A 540-amino-acid polypeptide reads, in one-letter code: Probable H/ACA ribonucleoprotein complex subunit 4 (540 aa).

The segment at 1–24 (MTTDKKSKSKSSEKSTQEVEQVIK) is disordered. Catalysis depends on Asp109, which acts as the Nucleophile. Residues 280–355 (YKRIVVKDSA…VVATIKRVIM (76 aa)) form the PUA domain. Positions 414 to 540 (SPVESMNVDT…DKKEKKKSKN (127 aa)) are disordered. The stretch at 448-494 (KKEKKDKKEKKKDSSDDESEEEKSSKKDKKEKKEKKEKKEKKSSKDD) forms a coiled coil. Basic residues predominate over residues 473-489 (KKDKKEKKEKKEKKEKK). Composition is skewed to basic and acidic residues over residues 490–503 (SSKDDSDDESSKKE) and 513–528 (SDKDSDSEKESSDKKD). The segment covering 529 to 540 (KKDKKEKKKSKN) has biased composition (basic residues).

Belongs to the pseudouridine synthase TruB family. Component of the small nucleolar ribonucleoprotein particles containing H/ACA-type snoRNAs (H/ACA snoRNPs).

Its subcellular location is the nucleus. The protein localises to the nucleolus. The catalysed reaction is a uridine in RNA = a pseudouridine in RNA. Its function is as follows. Plays a central role in ribosomal RNA processing. Probable catalytic subunit of H/ACA small nucleolar ribonucleoprotein (H/ACA snoRNP) complex, which catalyzes pseudouridylation of rRNA. This involves the isomerization of uridine such that the ribose is subsequently attached to C5, instead of the normal N1. Pseudouridine ('psi') residues may serve to stabilize the conformation of rRNAs. This chain is Probable H/ACA ribonucleoprotein complex subunit 4 (nola4), found in Dictyostelium discoideum (Social amoeba).